A 599-amino-acid polypeptide reads, in one-letter code: NTPase KAP family P-loop domain-containing protein 1 (599 aa).

One can recognise a KAP NTPase domain in the interval 1 to 416 (MQQEAAQRES…NTVPITVRLL (416 aa)). The next 3 helical transmembrane spans lie at 25–45 (GWGV…ITEL), 119–139 (VCLA…LLYL), and 156–176 (ALGG…VYSV). The tract at residues 543 to 599 (ALKPPSPPKSPSQDGPQASPRAIIAAGTSHAGQGSGHSKEAHQTRDRTHGGKPRPMA) is disordered. The span at 579–591 (HSKEAHQTRDRTH) shows a compositional bias: basic and acidic residues.

The protein localises to the membrane. This Mus musculus (Mouse) protein is NTPase KAP family P-loop domain-containing protein 1 (Nkpd1).